The chain runs to 130 residues: Small ribosomal subunit protein uS8 (130 aa).

Belongs to the universal ribosomal protein uS8 family. As to quaternary structure, part of the 30S ribosomal subunit.

Its function is as follows. One of the primary rRNA binding proteins, it binds directly to 16S rRNA central domain where it helps coordinate assembly of the platform of the 30S subunit. The protein is Small ribosomal subunit protein uS8 of Methanoregula boonei (strain DSM 21154 / JCM 14090 / 6A8).